The primary structure comprises 202 residues: ATP-dependent Clp protease proteolytic subunit (202 aa).

S101 acts as the Nucleophile in catalysis. The active site involves H126.

This sequence belongs to the peptidase S14 family. In terms of assembly, component of the chloroplastic Clp protease core complex.

It is found in the plastid. The protein resides in the chloroplast stroma. The catalysed reaction is Hydrolysis of proteins to small peptides in the presence of ATP and magnesium. alpha-casein is the usual test substrate. In the absence of ATP, only oligopeptides shorter than five residues are hydrolyzed (such as succinyl-Leu-Tyr-|-NHMec, and Leu-Tyr-Leu-|-Tyr-Trp, in which cleavage of the -Tyr-|-Leu- and -Tyr-|-Trp bonds also occurs).. Its function is as follows. Cleaves peptides in various proteins in a process that requires ATP hydrolysis. Has a chymotrypsin-like activity. Plays a major role in the degradation of misfolded proteins. The polypeptide is ATP-dependent Clp protease proteolytic subunit (Calycanthus floridus var. glaucus (Eastern sweetshrub)).